We begin with the raw amino-acid sequence, 335 residues long: Protein-arginine kinase (335 aa).

The 224-residue stretch at 20–243 (IVMSSRIRLA…QQIINEEMQI (224 aa)) folds into the Phosphagen kinase C-terminal domain. Residues 23–27 (SSRIR), histidine 81, arginine 114, 165–169 (RASVM), and 196–201 (RGIYGE) each bind ATP.

The protein belongs to the ATP:guanido phosphotransferase family.

It catalyses the reaction L-arginyl-[protein] + ATP = N(omega)-phospho-L-arginyl-[protein] + ADP + H(+). In terms of biological role, catalyzes the specific phosphorylation of arginine residues in proteins. This chain is Protein-arginine kinase, found in Staphylococcus haemolyticus (strain JCSC1435).